We begin with the raw amino-acid sequence, 421 residues long: Pyridinium-3,5-bisthiocarboxylic acid mononucleotide nickel insertion protein (421 aa).

The protein belongs to the LarC family.

It catalyses the reaction Ni(II)-pyridinium-3,5-bisthiocarboxylate mononucleotide = pyridinium-3,5-bisthiocarboxylate mononucleotide + Ni(2+). Its function is as follows. Involved in the biosynthesis of a nickel-pincer cofactor ((SCS)Ni(II) pincer complex). Binds Ni(2+), and functions in nickel delivery to pyridinium-3,5-bisthiocarboxylic acid mononucleotide (P2TMN), to form the mature cofactor. Is thus probably required for the activation of nickel-pincer cofactor-dependent enzymes. In Alkaliphilus metalliredigens (strain QYMF), this protein is Pyridinium-3,5-bisthiocarboxylic acid mononucleotide nickel insertion protein.